Consider the following 35-residue polypeptide: uncharacterized protein (35 aa).

Residues 10–30 form a helical membrane-spanning segment; it reads LMITASFFAIFIIIVVSVLLL.

Its subcellular location is the membrane. This is an uncharacterized protein from Salmonella typhimurium (strain LT2 / SGSC1412 / ATCC 700720).